A 312-amino-acid chain; its full sequence is Olfactory receptor 1F1 (312 aa).

The Extracellular segment spans residues 1-25 (MSGTNQSSVSEFLLLGLSRQPQQQH). Asn-5 is a glycosylation site (N-linked (GlcNAc...) asparagine). A helical membrane pass occupies residues 26 to 49 (LLFVFFLSMYLATVLGNLLIILSV). Over 50-57 (SIDSCLHT) the chain is Cytoplasmic. A helical membrane pass occupies residues 58–79 (PMYFFLSNLSFVDICFSFTTVP). At 80–100 (KMLANHILETQTISFCGCLTQ) the chain is on the extracellular side. Residues Cys-97 and Cys-189 are joined by a disulfide bond. The chain crosses the membrane as a helical span at residues 101-120 (MYFVFMFVDMDNFLLAVMAY). Residues 121 to 139 (DHFVAVCHPLHYTAKMTHQ) are Cytoplasmic-facing. A helical transmembrane segment spans residues 140–158 (LCALLVAGLWVVANLNVLL). Over 159–196 (HTLLMAPLSFCADNAITHFFCDVTPLLKLSCSDTHLNE) the chain is Extracellular. Residues 197 to 219 (VIILSEGALVMITPFLCILASYM) form a helical membrane-spanning segment. The Cytoplasmic portion of the chain corresponds to 220 to 236 (HITCTVLKVPSTKGRWK). Residues 237–259 (AFSTCGSHLAVVLLFYSTIIAVY) form a helical membrane-spanning segment. At 260–272 (FNPLSSHSAEKDT) the chain is on the extracellular side. A helical membrane pass occupies residues 273–292 (MATVLYTVVTPMLNPFIYSL). At 293-312 (RNRYLKGALKKVVGRVVFSV) the chain is on the cytoplasmic side.

It belongs to the G-protein coupled receptor 1 family.

It is found in the cell membrane. In terms of biological role, odorant receptor. This Homo sapiens (Human) protein is Olfactory receptor 1F1 (OR1F1).